The primary structure comprises 146 residues: MGTPASVVSEPPLWQVSTAQPRDRGRGRKQASANIFQDAELVQIQGLFQRSGDQLAEERAQIIWECAGDHRVAEALRRLRRKRPPRQNHCSRLRVPELGSTAADPQASTTDTASSEQFGNSRRTSARVHRNWNKPGPTGYLHQIRH.

Disordered regions lie at residues 1-31 and 80-146; these read MGTP…RKQA and RRKR…QIRH. Over residues 80–92 the composition is skewed to basic residues; it reads RRKRPPRQNHCSR. The span at 106–123 shows a compositional bias: polar residues; that stretch reads QASTTDTASSEQFGNSRR.

Its function is as follows. May be involved in MAP kinase activation, epithelial sodium channel (ENaC) down-regulation and cell cycling. In Rattus norvegicus (Rat), this protein is Arginine vasopressin-induced protein 1 (Avpi1).